The following is a 169-amino-acid chain: Protein MGF 110-12L (169 aa).

The next 3 membrane-spanning stretches (helical) occupy residues 2-20 (KVFLGLLLGFSIILILTYQ), 121-141 (QCCFYLVFSFAFAGCVAFAIC), and 148-168 (TTIKLLILLSILVWLSQPILN).

The protein belongs to the asfivirus MGF 110 family.

Its subcellular location is the host membrane. Functionally, plays a role in virus cell tropism, and may be required for efficient virus replication in macrophages. This is Protein MGF 110-12L from African swine fever virus (isolate Pig/Kenya/KEN-50/1950) (ASFV).